Reading from the N-terminus, the 101-residue chain is NAD(P)H-quinone oxidoreductase subunit 4L, chloroplastic (101 aa).

The next 3 membrane-spanning stretches (helical) occupy residues 2–22 (MFEYALVLSSYLFSMGIYGLI), 32–52 (MCLELILNAVNMNLVTFSDLF), and 61–81 (IFSIFVIAIAAAEAAIGPAIV).

Belongs to the complex I subunit 4L family. In terms of assembly, NDH is composed of at least 16 different subunits, 5 of which are encoded in the nucleus.

It localises to the plastid. Its subcellular location is the chloroplast thylakoid membrane. It carries out the reaction a plastoquinone + NADH + (n+1) H(+)(in) = a plastoquinol + NAD(+) + n H(+)(out). The catalysed reaction is a plastoquinone + NADPH + (n+1) H(+)(in) = a plastoquinol + NADP(+) + n H(+)(out). In terms of biological role, NDH shuttles electrons from NAD(P)H:plastoquinone, via FMN and iron-sulfur (Fe-S) centers, to quinones in the photosynthetic chain and possibly in a chloroplast respiratory chain. The immediate electron acceptor for the enzyme in this species is believed to be plastoquinone. Couples the redox reaction to proton translocation, and thus conserves the redox energy in a proton gradient. This chain is NAD(P)H-quinone oxidoreductase subunit 4L, chloroplastic, found in Amborella trichopoda.